The sequence spans 180 residues: ATP synthase subunit b 2 (180 aa).

A helical membrane pass occupies residues 33-53; the sequence is IFWLLVTLVAIYFLLTRVALP.

This sequence belongs to the ATPase B chain family. As to quaternary structure, F-type ATPases have 2 components, F(1) - the catalytic core - and F(0) - the membrane proton channel. F(1) has five subunits: alpha(3), beta(3), gamma(1), delta(1), epsilon(1). F(0) has three main subunits: a(1), b(2) and c(10-14). The alpha and beta chains form an alternating ring which encloses part of the gamma chain. F(1) is attached to F(0) by a central stalk formed by the gamma and epsilon chains, while a peripheral stalk is formed by the delta and b chains.

It localises to the cell inner membrane. Its function is as follows. F(1)F(0) ATP synthase produces ATP from ADP in the presence of a proton or sodium gradient. F-type ATPases consist of two structural domains, F(1) containing the extramembraneous catalytic core and F(0) containing the membrane proton channel, linked together by a central stalk and a peripheral stalk. During catalysis, ATP synthesis in the catalytic domain of F(1) is coupled via a rotary mechanism of the central stalk subunits to proton translocation. In terms of biological role, component of the F(0) channel, it forms part of the peripheral stalk, linking F(1) to F(0). The b'-subunit is a diverged and duplicated form of b found in plants and photosynthetic bacteria. The sequence is that of ATP synthase subunit b 2 (atpF2) from Cereibacter sphaeroides (strain ATCC 17029 / ATH 2.4.9) (Rhodobacter sphaeroides).